A 154-amino-acid chain; its full sequence is 3-dehydroquinate dehydratase (154 aa).

Residue tyrosine 22 is the Proton acceptor of the active site. 3 residues coordinate substrate: asparagine 73, histidine 79, and aspartate 86. The active-site Proton donor is the histidine 99. Residues 100-101 and arginine 110 contribute to the substrate site; that span reads LS.

It belongs to the type-II 3-dehydroquinase family. As to quaternary structure, homododecamer.

It carries out the reaction 3-dehydroquinate = 3-dehydroshikimate + H2O. It functions in the pathway metabolic intermediate biosynthesis; chorismate biosynthesis; chorismate from D-erythrose 4-phosphate and phosphoenolpyruvate: step 3/7. Functionally, catalyzes a trans-dehydration via an enolate intermediate. This Carboxydothermus hydrogenoformans (strain ATCC BAA-161 / DSM 6008 / Z-2901) protein is 3-dehydroquinate dehydratase.